The following is a 154-amino-acid chain: PTTG1IP family member 2 (154 aa).

Positions 1–26 (MCWLRAWGQILLPVFLSLFLIQLLIS) are cleaved as a signal peptide. Residues 27 to 97 (FSENGFIHSP…SIYWLNCKVD (71 aa)) are Extracellular-facing. Residues 98-118 (MFGIMMLLLIAVLITGFVWYC) form a helical membrane-spanning segment. Topologically, residues 119–154 (CAYHFYLQDLNRNRVYFYGRRETVPIHDRSATVYDE) are cytoplasmic.

It localises to the membrane. In Homo sapiens (Human), this protein is PTTG1IP family member 2.